Consider the following 370-residue polypeptide: S-adenosylmethionine decarboxylase proenzyme (370 aa).

F28 is a substrate binding site. Active-site residues include E29 and E32. Residue E85 participates in substrate binding. Catalysis depends on S86, which acts as the Schiff-base intermediate with substrate; via pyruvic acid. S86 carries the pyruvic acid (Ser); by autocatalysis modification. C100 acts as the Proton donor; for catalytic activity in catalysis. Residues S249 and H262 each act as proton acceptor; for processing activity in the active site. Residue E266 coordinates substrate.

The protein belongs to the eukaryotic AdoMetDC family. Forms a heterodimer with catalytically inactive AdoMetDC prozyme; heterodimerization is required to activate AdoMetDC. Pyruvate serves as cofactor. In terms of processing, is synthesized initially as an inactive proenzyme. Formation of the active enzyme involves a self-maturation process in which the active site pyruvoyl group is generated from an internal serine residue via an autocatalytic post-translational modification. Two non-identical subunits are generated from the proenzyme in this reaction, and the pyruvate is formed at the N-terminus of the alpha chain, which is derived from the carboxyl end of the proenzyme. The post-translation cleavage follows an unusual pathway, termed non-hydrolytic serinolysis, in which the side chain hydroxyl group of the serine supplies its oxygen atom to form the C-terminus of the beta chain, while the remainder of the serine residue undergoes an oxidative deamination to produce ammonia and the pyruvoyl group blocking the N-terminus of the alpha chain.

The catalysed reaction is S-adenosyl-L-methionine + H(+) = S-adenosyl 3-(methylsulfanyl)propylamine + CO2. The protein operates within amine and polyamine biosynthesis; S-adenosylmethioninamine biosynthesis; S-adenosylmethioninamine from S-adenosyl-L-methionine: step 1/1. Allosterically activated by AdoMetDC prozyme. Activated by putrescine and to a lesser extent by spermidine, norspermidine and spermine. Inhibited by 5'-([(Z)-4-amino-2-butenyl]methylamino)-5'-deoxyadenosine (MDL 73811). In terms of biological role, in association with the catalytically inactive AdoMetDC prozyme, catalyzes the decarboxylation of S-adenosyl-L-methionine which is essential for the biosynthesis of the polyamine spermidine. Required for growth and survival during the bloodstream life cycle stage. In Trypanosoma brucei brucei, this protein is S-adenosylmethionine decarboxylase proenzyme.